We begin with the raw amino-acid sequence, 376 residues long: Ribosomal RNA large subunit methyltransferase G (376 aa).

Belongs to the methyltransferase superfamily. RlmG family.

It is found in the cytoplasm. It catalyses the reaction guanosine(1835) in 23S rRNA + S-adenosyl-L-methionine = N(2)-methylguanosine(1835) in 23S rRNA + S-adenosyl-L-homocysteine + H(+). Functionally, specifically methylates the guanine in position 1835 (m2G1835) of 23S rRNA. The protein is Ribosomal RNA large subunit methyltransferase G of Klebsiella pneumoniae subsp. pneumoniae (strain ATCC 700721 / MGH 78578).